The sequence spans 365 residues: Chaperone protein DnaJ (365 aa).

The J domain maps to 4 to 70 (DYYKILGVDR…QKRRMYDQTG (67 aa)). Residues 139–220 (GTEKRIKYRR…CNGTGTVVVN (82 aa)) form a CR-type zinc finger. Zn(2+)-binding residues include Cys152, Cys155, Cys168, Cys171, Cys194, Cys197, Cys208, and Cys211. CXXCXGXG motif repeat units lie at residues 152–159 (CPDCNGTG), 168–175 (CPTCNGTG), 194–201 (CQTCGGRG), and 208–215 (CPRCNGTG).

It belongs to the DnaJ family. Homodimer. It depends on Zn(2+) as a cofactor.

The protein resides in the cytoplasm. In terms of biological role, participates actively in the response to hyperosmotic and heat shock by preventing the aggregation of stress-denatured proteins and by disaggregating proteins, also in an autonomous, DnaK-independent fashion. Unfolded proteins bind initially to DnaJ; upon interaction with the DnaJ-bound protein, DnaK hydrolyzes its bound ATP, resulting in the formation of a stable complex. GrpE releases ADP from DnaK; ATP binding to DnaK triggers the release of the substrate protein, thus completing the reaction cycle. Several rounds of ATP-dependent interactions between DnaJ, DnaK and GrpE are required for fully efficient folding. Also involved, together with DnaK and GrpE, in the DNA replication of plasmids through activation of initiation proteins. This chain is Chaperone protein DnaJ, found in Thermoplasma acidophilum (strain ATCC 25905 / DSM 1728 / JCM 9062 / NBRC 15155 / AMRC-C165).